The chain runs to 468 residues: Uronate isomerase (468 aa).

This sequence belongs to the metallo-dependent hydrolases superfamily. Uronate isomerase family.

It carries out the reaction D-glucuronate = D-fructuronate. It catalyses the reaction aldehydo-D-galacturonate = keto-D-tagaturonate. Its pathway is carbohydrate metabolism; pentose and glucuronate interconversion. In Bacteroides thetaiotaomicron (strain ATCC 29148 / DSM 2079 / JCM 5827 / CCUG 10774 / NCTC 10582 / VPI-5482 / E50), this protein is Uronate isomerase.